The primary structure comprises 292 residues: Norajmaline N-methyltransferase (292 aa).

An SAM motif I region spans residues Lys71–Val80. The interval Lys134 to Leu142 is SAM motif II. The Vacuolar targeting signal motif lies at Asp135–Val141. The tract at residues Ile161 to Ile170 is SAM motif III.

It belongs to the class I-like SAM-binding methyltransferase superfamily. gTMT family. In terms of assembly, homodimer. Mainly expressed in mature roots and, to a lesser extent, in leaves, stems and flowers.

It localises to the vacuole membrane. The enzyme catalyses norajmaline + S-adenosyl-L-methionine = ajmaline + S-adenosyl-L-homocysteine + H(+). It catalyses the reaction 4-methylnorajmaline + S-adenosyl-L-methionine = 4-methylajmaline + S-adenosyl-L-homocysteine + H(+). It functions in the pathway alkaloid biosynthesis; ajmaline biosynthesis. Functionally, N-methyltransferase involved in the biosynthesis of ajmaline-type monoterpenoid indole alkaloids (MIAs) natural products, important plant-derived pharmaceuticals used in the therapy of heart disorders. Catalyzes the indole N-methylation of norajmaline to produce ajmaline. Also able, with a lower efficiency, to mediates the conversion of 4-methylnorajmaline to 4-methylajmaline. This is Norajmaline N-methyltransferase from Rauvolfia serpentina (Serpentine wood).